The following is a 125-amino-acid chain: uncharacterized protein (125 aa).

A run of 3 helical transmembrane segments spans residues 20 to 42 (RNGG…LTIL), 57 to 76 (LMNA…GVVV), and 81 to 103 (YLFV…YMAS).

It localises to the cell membrane. This is an uncharacterized protein from Archaeoglobus fulgidus (strain ATCC 49558 / DSM 4304 / JCM 9628 / NBRC 100126 / VC-16).